The primary structure comprises 254 residues: Alcohol dehydrogenase (254 aa).

NAD(+) is bound at residue phenylalanine 10–leucine 33. Serine 138 provides a ligand contact to substrate. The active-site Proton acceptor is tyrosine 151.

It belongs to the short-chain dehydrogenases/reductases (SDR) family. As to quaternary structure, homodimer.

It carries out the reaction a primary alcohol + NAD(+) = an aldehyde + NADH + H(+). It catalyses the reaction a secondary alcohol + NAD(+) = a ketone + NADH + H(+). This Drosophila immigrans (Fruit fly) protein is Alcohol dehydrogenase (Adh).